The following is a 643-amino-acid chain: Threonine--tRNA ligase (643 aa).

The TGS domain occupies 1-61 (MVAISLPDGS…TTDASVSLIT (61 aa)). Residues 243–534 (DHRRVGQEMD…LIENCAGRFP (292 aa)) form a catalytic region. Zn(2+) is bound by residues cysteine 334, histidine 385, and histidine 511.

Belongs to the class-II aminoacyl-tRNA synthetase family. Homodimer. Zn(2+) is required as a cofactor.

Its subcellular location is the cytoplasm. The catalysed reaction is tRNA(Thr) + L-threonine + ATP = L-threonyl-tRNA(Thr) + AMP + diphosphate + H(+). In terms of biological role, catalyzes the attachment of threonine to tRNA(Thr) in a two-step reaction: L-threonine is first activated by ATP to form Thr-AMP and then transferred to the acceptor end of tRNA(Thr). Also edits incorrectly charged L-seryl-tRNA(Thr). This is Threonine--tRNA ligase from Rhodospirillum rubrum (strain ATCC 11170 / ATH 1.1.1 / DSM 467 / LMG 4362 / NCIMB 8255 / S1).